A 436-amino-acid chain; its full sequence is Serine/threonine-protein kinase STK11 (436 aa).

The residue at position 31 (serine 31) is a Phosphoserine. N6-acetyllysine is present on residues lysine 44 and lysine 48. The interval leucine 45 to asparagine 90 is sufficient for interaction with SIRT1. The Protein kinase domain occupies tyrosine 49 to phenylalanine 309. ATP is bound by residues leucine 55 to valine 63 and lysine 78. An N6-acetyllysine mark is found at lysine 96 and lysine 97. Residue aspartate 176 is the Proton acceptor of the active site. The residue at position 189 (threonine 189) is a Phosphothreonine; by autocatalysis. Residues lysine 296 and lysine 311 each carry the N6-acetyllysine modification. Serine 325 bears the Phosphoserine mark. A Phosphothreonine; by autocatalysis modification is found at threonine 336. Threonine 366 is subject to Phosphothreonine; by ATM and autocatalysis. Residues threonine 398–valine 421 form a disordered region. Residue serine 403 is modified to Phosphoserine. Lysine 420 is modified (N6-acetyllysine). Cysteine 422 carries S-palmitoyl cysteine lipidation. Lysine 426 is modified (N6-acetyllysine). At serine 431 the chain carries Phosphoserine; by autocatalysis, PKA, PKC/PRKCZ and RPS6KA1. The residue at position 433 (cysteine 433) is a Cysteine methyl ester. Residue cysteine 433 is the site of S-farnesyl cysteine attachment. Lysine 434 is modified (N6-acetyllysine). The propeptide at lysine 434–glutamine 436 is removed in mature form.

It belongs to the protein kinase superfamily. CAMK Ser/Thr protein kinase family. LKB1 subfamily. As to quaternary structure, catalytic component of a trimeric complex composed of STK11/LKB1, STRAD (STRADA or STRADB) and CAB39/MO25 (CAB39/MO25alpha or CAB39L/MO25beta): the complex tethers STK11/LKB1 in the cytoplasm and stimulates its catalytic activity. Found in a ternary complex composed of SMAD4, STK11/LKB1 and STK11IP. Interacts with p53/TP53, SMAD4, STK11IP and WDR6. Interacts with NR4A1. Interacts with NISCH; this interaction may increase STK11 activity. Interacts with PTEN, leading to PTEN phosphorylation. Interacts with SIRT1; the interaction deacetylates STK11. Interacts with CDKN1A. Mg(2+) serves as cofactor. The cofactor is Mn(2+). In terms of processing, phosphorylated by ATM at Thr-366 following ionizing radiation (IR). Phosphorylation at Ser-431 by RPS6KA1 and/or some PKA is required to inhibit cell growth. Phosphorylation at Ser-431 is also required during neuronal polarization to mediate phosphorylation of BRSK1 and BRSK2. Phosphorylation by PKC/PRKCZ at Ser-399 in isoform 2 promotes metformin (or peroxynitrite)-induced nuclear export of STK11 and activation of AMPK. UV radiation-induced phosphorylation at Thr-366 mediates CDKN1A degradation. Acetylated. Deacetylation at Lys-48 enhances cytoplasmic localization and kinase activity in vitro. As to expression, widely expressed. In terms of tissue distribution, predominantly expressed in testis (at protein level). Expressed in adult brain and liver and absent from tissues derived from postnatal day 7.

It localises to the nucleus. The protein resides in the cytoplasm. Its subcellular location is the membrane. It is found in the mitochondrion. It catalyses the reaction L-seryl-[protein] + ATP = O-phospho-L-seryl-[protein] + ADP + H(+). The enzyme catalyses L-threonyl-[protein] + ATP = O-phospho-L-threonyl-[protein] + ADP + H(+). Activated by forming a complex with STRAD (STRADA or STRADB) and CAB39/MO25 (CAB39/MO25alpha or CAB39L/MO25beta): STRADA (or STRADB)-binding promotes a conformational change of STK11/LKB1 in an active conformation, which is stabilized by CAB39/MO25alpha (or CAB39L/MO25beta) interacting with the STK11/LKB1 activation loop. Sequestration in the nucleus by NR4A1 prevents it from phosphorylating and activating cytoplasmic AMPK. Its function is as follows. Tumor suppressor serine/threonine-protein kinase that controls the activity of AMP-activated protein kinase (AMPK) family members, thereby playing a role in various processes such as cell metabolism, cell polarity, apoptosis and DNA damage response. Acts by phosphorylating the T-loop of AMPK family proteins, thus promoting their activity: phosphorylates PRKAA1, PRKAA2, BRSK1, BRSK2, MARK1, MARK2, MARK3, MARK4, NUAK1, NUAK2, SIK1, SIK2, SIK3 and SNRK but not MELK. Also phosphorylates non-AMPK family proteins such as STRADA, PTEN and possibly p53/TP53. Acts as a key upstream regulator of AMPK by mediating phosphorylation and activation of AMPK catalytic subunits PRKAA1 and PRKAA2 and thereby regulates processes including: inhibition of signaling pathways that promote cell growth and proliferation when energy levels are low, glucose homeostasis in liver, activation of autophagy when cells undergo nutrient deprivation, and B-cell differentiation in the germinal center in response to DNA damage. Also acts as a regulator of cellular polarity by remodeling the actin cytoskeleton. Required for cortical neuron polarization by mediating phosphorylation and activation of BRSK1 and BRSK2, leading to axon initiation and specification. Involved in DNA damage response: interacts with p53/TP53 and recruited to the CDKN1A/WAF1 promoter to participate in transcription activation. Able to phosphorylate p53/TP53; the relevance of such result in vivo is however unclear and phosphorylation may be indirect and mediated by downstream STK11/LKB1 kinase NUAK1. Also acts as a mediator of p53/TP53-dependent apoptosis via interaction with p53/TP53: translocates to the mitochondrion during apoptosis and regulates p53/TP53-dependent apoptosis pathways. Regulates UV radiation-induced DNA damage response mediated by CDKN1A. In association with NUAK1, phosphorylates CDKN1A in response to UV radiation and contributes to its degradation which is necessary for optimal DNA repair. In terms of biological role, has a role in spermiogenesis. The sequence is that of Serine/threonine-protein kinase STK11 from Mus musculus (Mouse).